The chain runs to 191 residues: Classical arabinogalactan protein 9 (191 aa).

An N-terminal signal peptide occupies residues 1–20 (MARSFAIAVICIVLIAGVTG). The tract at residues 20 to 172 (GQAPTSPPTA…SPTDVNDQNG (153 aa)) is disordered. A Pyrrolidone carboxylic acid modification is found at Gln21. 4-hydroxyproline occurs at positions 23, 26, 27, 31, and 33. Positions 24 to 146 (TSPPTATPAP…PSPSSSPPLP (123 aa)) are enriched in pro residues. O-linked (Ara...) hydroxyproline glycosylation is found at Pro26, Pro27, Pro31, and Pro33. A compositionally biased stretch (polar residues) spans 155–172 (TDSISPAPSPTDVNDQNG). Gly172 carries the GPI-anchor amidated glycine lipid modification. The propeptide at 173–191 (ASKMVSSLVFGSVLVWFMI) is removed in mature form.

This sequence belongs to the classical AGP family. Post-translationally, O-glycosylated on hydroxyprolines; noncontiguous hydroxylproline residues are glycosylated with arabinogalactan. In terms of tissue distribution, predominantly expressed in flowers and at a lower level in leaves and siliques.

The protein localises to the cell membrane. Its function is as follows. Proteoglycan that seems to be implicated in diverse developmental roles such as differentiation, cell-cell recognition, embryogenesis and programmed cell death. The sequence is that of Classical arabinogalactan protein 9 (AGP9) from Arabidopsis thaliana (Mouse-ear cress).